The sequence spans 172 residues: Shikimate kinase (172 aa).

11-16 contributes to the ATP binding site; that stretch reads GAGKST. S15 is a binding site for Mg(2+). Substrate is bound by residues D33, R57, and G79. Position 117 (R117) interacts with ATP. R136 serves as a coordination point for substrate. An ATP-binding site is contributed by R153.

Belongs to the shikimate kinase family. As to quaternary structure, monomer. Mg(2+) is required as a cofactor.

It is found in the cytoplasm. It catalyses the reaction shikimate + ATP = 3-phosphoshikimate + ADP + H(+). The protein operates within metabolic intermediate biosynthesis; chorismate biosynthesis; chorismate from D-erythrose 4-phosphate and phosphoenolpyruvate: step 5/7. Catalyzes the specific phosphorylation of the 3-hydroxyl group of shikimic acid using ATP as a cosubstrate. The sequence is that of Shikimate kinase from Pseudomonas fluorescens (strain Pf0-1).